The chain runs to 412 residues: uncharacterized protein (412 aa).

The region spanning 50–264 (EVDIRTAYIN…KSGRRIVIGD (215 aa)) is the Radical SAM core domain. Positions 64, 68, and 71 each coordinate [4Fe-4S] cluster.

Belongs to the radical SAM superfamily. Anaerobic sulfatase-maturating enzyme family. The cofactor is [4Fe-4S] cluster.

This is an uncharacterized protein from Archaeoglobus fulgidus (strain ATCC 49558 / DSM 4304 / JCM 9628 / NBRC 100126 / VC-16).